Reading from the N-terminus, the 285-residue chain is ATP synthase gamma chain (285 aa).

It belongs to the ATPase gamma chain family. F-type ATPases have 2 components, CF(1) - the catalytic core - and CF(0) - the membrane proton channel. CF(1) has five subunits: alpha(3), beta(3), gamma(1), delta(1), epsilon(1). CF(0) has three main subunits: a, b and c.

The protein resides in the cell membrane. Functionally, produces ATP from ADP in the presence of a proton gradient across the membrane. The gamma chain is believed to be important in regulating ATPase activity and the flow of protons through the CF(0) complex. This chain is ATP synthase gamma chain, found in Clostridium novyi (strain NT).